A 315-amino-acid chain; its full sequence is Olfactory receptor 3A10 (315 aa).

Residues 1–28 (MEPGAWGNRTAVTDFILLGLTGNVRLQP) lie on the Extracellular side of the membrane. N-linked (GlcNAc...) asparagine glycosylation occurs at Asn-8. A helical transmembrane segment spans residues 29-49 (ILFVVFFFAYIVTVGGNLSIL). Residues 50-68 (AAIFVEPKLHTPMYYFLGN) are Cytoplasmic-facing. A helical transmembrane segment spans residues 69–89 (LSLLDIGCISVTVPPMLVCLL). The Extracellular segment spans residues 90 to 97 (AHECRVPY). Residues 98 to 118 (AACISQLFFFHLLAGVDCHLL) traverse the membrane as a helical segment. Cys-100 and Cys-192 are disulfide-bonded. At 119–145 (TAMAYDRYLAICQPLTYSTRMSREVQG) the chain is on the cytoplasmic side. The chain crosses the membrane as a helical span at residues 146 to 166 (TLVGICCTVSFINALTHTVAV). At 167-200 (SVLDFCGPNVVNHFYCDLPPLFQLSCSSIYLNGQ) the chain is on the extracellular side. A helical transmembrane segment spans residues 201–221 (LLFVGATFMGVVPMILISVSY). The Cytoplasmic segment spans residues 222-239 (AHVAAAVLRIRSTEGRKK). A helical membrane pass occupies residues 240–260 (AFSTCGSHLTVVCIFYGTGFF). Residues 261–274 (SYMRLGSVSASDKD) lie on the Extracellular side of the membrane. The chain crosses the membrane as a helical span at residues 275–295 (KGIGILNTILSPMLNPLIYSL). Residues 296–315 (RNPDVQGALKRVLTGKRYPV) lie on the Cytoplasmic side of the membrane.

This sequence belongs to the G-protein coupled receptor 1 family.

It is found in the cell membrane. Odorant receptor. The polypeptide is Olfactory receptor 3A10 (Mus musculus (Mouse)).